A 180-amino-acid polypeptide reads, in one-letter code: Trichosurin (180 aa).

The N-terminal stretch at 1–15 (MKLLLLSMGLALVCG) is a signal peptide. 2 N-linked (GlcNAc...) asparagine glycosylation sites follow: N67 and N148. C87 and C180 form a disulfide bridge.

It belongs to the calycin superfamily. Lipocalin family. Homodimer. In terms of tissue distribution, milk.

It is found in the secreted. In Trichosurus vulpecula (Brush-tailed possum), this protein is Trichosurin.